Here is a 1053-residue protein sequence, read N- to C-terminus: Sal-like protein 4 (1053 aa).

The segment at 1 to 62 (MSRRKQAKPQ…DEVASEDEAT (62 aa)) is disordered. The span at 20 to 46 (EQQPQQQTPEFADAAPAAPAAGELGAP) shows a compositional bias: low complexity. Position 57 is a phosphoserine (serine 57). The segment at 72 to 94 (HVCEKCCAEFFSISEFLEHKKNC) adopts a C2H2-type 1; atypical zinc-finger fold. Residues 116-149 (SGAVLSHQPTSPGSKDCHRENGGSSEDMKEKPDA) are disordered. Positions 130–149 (KDCHRENGGSSEDMKEKPDA) are enriched in basic and acidic residues. Lysine 156 is covalently cross-linked (Glycyl lysine isopeptide (Lys-Gly) (interchain with G-Cter in SUMO1); alternate). Residue lysine 156 forms a Glycyl lysine isopeptide (Lys-Gly) (interchain with G-Cter in SUMO2); alternate linkage. Glycyl lysine isopeptide (Lys-Gly) (interchain with G-Cter in SUMO2) cross-links involve residues lysine 175, lysine 190, and lysine 290. Position 307 is a phosphoserine (serine 307). Lysine 316 participates in a covalent cross-link: Glycyl lysine isopeptide (Lys-Gly) (interchain with G-Cter in SUMO1); alternate. Residue lysine 316 forms a Glycyl lysine isopeptide (Lys-Gly) (interchain with G-Cter in SUMO2); alternate linkage. A Glycyl lysine isopeptide (Lys-Gly) (interchain with G-Cter in SUMO2) cross-link involves residue lysine 372. Lysine 374 participates in a covalent cross-link: Glycyl lysine isopeptide (Lys-Gly) (interchain with G-Cter in SUMO1); alternate. Residue lysine 374 forms a Glycyl lysine isopeptide (Lys-Gly) (interchain with G-Cter in SUMO2); alternate linkage. 2 C2H2-type zinc fingers span residues 382–404 (HKCK…LRSH) and 410–432 (FVCS…FHRH). Lysine 436 participates in a covalent cross-link: Glycyl lysine isopeptide (Lys-Gly) (interchain with G-Cter in SUMO2). Residues 483 to 496 (VGLPQNLSSGTNPK) show a composition bias toward polar residues. The disordered stretch occupies residues 483–546 (VGLPQNLSSG…QGSGTPEPGS (64 aa)). Phosphothreonine is present on threonine 541. A Glycyl lysine isopeptide (Lys-Gly) (interchain with G-Cter in SUMO2) cross-link involves residue lysine 550. 2 C2H2-type zinc fingers span residues 566–588 (NECL…YRTH) and 594–616 (FQCK…LGVH). Residues lysine 597 and lysine 623 each participate in a glycyl lysine isopeptide (Lys-Gly) (interchain with G-Cter in SUMO2) cross-link. The segment at 626 to 648 (HSCPICQKKFTNAVMLQQHIRMH) adopts a C2H2-type 6 zinc-finger fold. Disordered stretches follow at residues 694–714 (EEVS…PLPS), 736–776 (VGPA…QSRS), and 788–828 (LSPA…LPST). The segment covering 698 to 708 (SQEAPSSSSKV) has biased composition (low complexity). Composition is skewed to polar residues over residues 743 to 776 (LQRQ…QSRS) and 788 to 797 (LSPANSQAES). Phosphoserine is present on residues serine 776 and serine 789. Over residues 810 to 821 (ESSENSRTEMEG) the composition is skewed to basic and acidic residues. Lysine 838 is covalently cross-linked (Glycyl lysine isopeptide (Lys-Gly) (interchain with G-Cter in SUMO1); alternate). Lysine 838 participates in a covalent cross-link: Glycyl lysine isopeptide (Lys-Gly) (interchain with G-Cter in SUMO2); alternate. Serine 852 is modified (phosphoserine). A C2H2-type 7 zinc finger spans residues 870-892 (HGCTRCGKNFSSASALQIHERTH). Residue lysine 896 forms a Glycyl lysine isopeptide (Lys-Gly) (interchain with G-Cter in SUMO2) linkage. The C2H2-type 8 zinc finger occupies 898–920 (FVCNICGRAFTTKGNLKVHYMTH). Glycyl lysine isopeptide (Lys-Gly) (interchain with G-Cter in SUMO2) cross-links involve residues lysine 932 and lysine 947. Residues 1018 to 1039 (GSQSGISADVEKPSATDGVPKH) are disordered. Position 1019 is a phosphoserine (serine 1019).

It belongs to the sal C2H2-type zinc-finger protein family. As to quaternary structure, interacts with POU5F1/OCT4. Interacts with NANOG. Interacts with BEND3. Interacts with NSD2 (via PHD-type zinc fingers 1, 2 and 3). Interacts with NRBP1. Post-translationally, isoform SALL4B exists primarily as a ubiquitinated form. Sumoylation with both SUMO1 and SUMO2 regulates the stability, subcellular localization, transcriptional activity, and may reduce interaction with POU5F1/OCT4. As to expression, expressed in testis. Constitutively expressed in acute myeloid leukemia (AML).

The protein resides in the cytoplasm. It is found in the nucleus. Transcription factor with a key role in the maintenance and self-renewal of embryonic and hematopoietic stem cells. The protein is Sal-like protein 4 (SALL4) of Homo sapiens (Human).